A 578-amino-acid chain; its full sequence is Malonate--CoA ligase ACSF3, mitochondrial (578 aa).

Residues 1 to 19 (MRVGAFLGRSLFSCSHVRG) constitute a mitochondrion transit peptide. Position 205 to 213 (205 to 213 (TSGTTGRPK)) interacts with ATP. The tract at residues 394–413 (QNPRKEGTSYTTHAQGDSTG) is disordered. Residues aspartate 459, arginine 473, and lysine 565 each coordinate ATP.

It belongs to the ATP-dependent AMP-binding enzyme family.

Its subcellular location is the mitochondrion. It carries out the reaction tetracosanoate + ATP + CoA = tetracosanoyl-CoA + AMP + diphosphate. It catalyses the reaction malonate + ATP + CoA = malonyl-CoA + AMP + diphosphate. Its function is as follows. Catalyzes the initial reaction in intramitochondrial fatty acid synthesis, by activating malonate and methylmalonate, but not acetate, into their respective CoA thioester. May have some preference toward very-long-chain substrates. The sequence is that of Malonate--CoA ligase ACSF3, mitochondrial from Xenopus laevis (African clawed frog).